The primary structure comprises 114 residues: Nucleoid-associated protein Cyan7425_0899 (114 aa).

This sequence belongs to the YbaB/EbfC family. In terms of assembly, homodimer.

Its subcellular location is the cytoplasm. It localises to the nucleoid. Binds to DNA and alters its conformation. May be involved in regulation of gene expression, nucleoid organization and DNA protection. The protein is Nucleoid-associated protein Cyan7425_0899 of Cyanothece sp. (strain PCC 7425 / ATCC 29141).